Here is a 252-residue protein sequence, read N- to C-terminus: Imidazole glycerol phosphate synthase subunit HisF (252 aa).

Active-site residues include aspartate 11 and aspartate 130.

This sequence belongs to the HisA/HisF family. Heterodimer of HisH and HisF.

The protein localises to the cytoplasm. The catalysed reaction is 5-[(5-phospho-1-deoxy-D-ribulos-1-ylimino)methylamino]-1-(5-phospho-beta-D-ribosyl)imidazole-4-carboxamide + L-glutamine = D-erythro-1-(imidazol-4-yl)glycerol 3-phosphate + 5-amino-1-(5-phospho-beta-D-ribosyl)imidazole-4-carboxamide + L-glutamate + H(+). Its pathway is amino-acid biosynthesis; L-histidine biosynthesis; L-histidine from 5-phospho-alpha-D-ribose 1-diphosphate: step 5/9. IGPS catalyzes the conversion of PRFAR and glutamine to IGP, AICAR and glutamate. The HisF subunit catalyzes the cyclization activity that produces IGP and AICAR from PRFAR using the ammonia provided by the HisH subunit. This Streptococcus gordonii (strain Challis / ATCC 35105 / BCRC 15272 / CH1 / DL1 / V288) protein is Imidazole glycerol phosphate synthase subunit HisF.